Consider the following 477-residue polypeptide: ACT domain-containing protein ACR1 (477 aa).

ACT domains follow at residues 38-124 (LIKV…REVQ), 134-214 (AFEI…GDVS), 283-358 (MVNV…RASQ), and 361-441 (KLEI…MMPR). The Bipartite nuclear localization signal motif lies at 329–345 (KKNGGTLETEGQRERLR).

In terms of tissue distribution, expressed in flowers and siliques.

The protein resides in the nucleus. In terms of biological role, may bind amino acids. The polypeptide is ACT domain-containing protein ACR1 (Arabidopsis thaliana (Mouse-ear cress)).